Consider the following 243-residue polypeptide: MRPQGPAASPQRLRGLLLLLLLQLPAPSSASEIPKGKQKAQLRQREVVDLYNGMCLQGPAGVPGRDGSPGANGIPGTPGIPGRDGFKGEKGECLRESFEESWTPNYKQCSWSSLNYGIDLGKIAECTFTKMRSNSALRVLFSGSLRLKCRNACCQRWYFTFNGAECSGPLPIEAIIYLDQGSPEMNSTINIHRTSSVEGLCEGIGAGLVDVAIWVGTCSDYPKGDASTGWNSVSRIIIEELPK.

Residues 1 to 30 form the signal peptide; sequence MRPQGPAASPQRLRGLLLLLLLQLPAPSSA. The Collagen-like domain maps to 57-90; sequence QGPAGVPGRDGSPGANGIPGTPGIPGRDGFKGEK. A disordered region spans residues 62–85; the sequence is VPGRDGSPGANGIPGTPGIPGRDG. Asparagine 186 carries N-linked (GlcNAc...) asparagine glycosylation.

In terms of processing, N-glycosylated. As to expression, isoform 1 is expressed in calcified atherosclerotic plaque and chondrocyte-like cells.

It localises to the secreted. It is found in the extracellular space. Its subcellular location is the extracellular matrix. Functionally, may act as a negative regulator of collagen matrix deposition. The protein is Collagen triple helix repeat-containing protein 1 (CTHRC1) of Homo sapiens (Human).